Reading from the N-terminus, the 338-residue chain is Anthranilate phosphoribosyltransferase (338 aa).

Residues Gly81, 84–85, Thr89, 91–94, 109–117, and Ala121 contribute to the 5-phospho-alpha-D-ribose 1-diphosphate site; these read GD, NIST, and KHGNRNLSS. Residue Gly81 coordinates anthranilate. Residue Ser93 participates in Mg(2+) binding. Asn112 is an anthranilate binding site. Arg167 serves as a coordination point for anthranilate. Positions 226 and 227 each coordinate Mg(2+).

Belongs to the anthranilate phosphoribosyltransferase family. In terms of assembly, homodimer. Mg(2+) is required as a cofactor.

It carries out the reaction N-(5-phospho-beta-D-ribosyl)anthranilate + diphosphate = 5-phospho-alpha-D-ribose 1-diphosphate + anthranilate. Its pathway is amino-acid biosynthesis; L-tryptophan biosynthesis; L-tryptophan from chorismate: step 2/5. Catalyzes the transfer of the phosphoribosyl group of 5-phosphorylribose-1-pyrophosphate (PRPP) to anthranilate to yield N-(5'-phosphoribosyl)-anthranilate (PRA). The sequence is that of Anthranilate phosphoribosyltransferase from Cereibacter sphaeroides (strain KD131 / KCTC 12085) (Rhodobacter sphaeroides).